A 588-amino-acid chain; its full sequence is Aspartate--tRNA ligase (588 aa).

Residue Glu172 participates in L-aspartate binding. An aspartate region spans residues 196 to 199 (QLFK). Position 218 (Arg218) interacts with L-aspartate. ATP-binding positions include 218–220 (RDE) and Gln227. Position 449 (His449) interacts with L-aspartate. Glu483 contacts ATP. An L-aspartate-binding site is contributed by Arg490. Residue 535-538 (GLDR) participates in ATP binding.

The protein belongs to the class-II aminoacyl-tRNA synthetase family. Type 1 subfamily. As to quaternary structure, homodimer.

Its subcellular location is the cytoplasm. It catalyses the reaction tRNA(Asp) + L-aspartate + ATP = L-aspartyl-tRNA(Asp) + AMP + diphosphate. In terms of biological role, catalyzes the attachment of L-aspartate to tRNA(Asp) in a two-step reaction: L-aspartate is first activated by ATP to form Asp-AMP and then transferred to the acceptor end of tRNA(Asp). The protein is Aspartate--tRNA ligase of Haemophilus influenzae (strain ATCC 51907 / DSM 11121 / KW20 / Rd).